Reading from the N-terminus, the 476-residue chain is Protein transport protein Sec61 subunit alpha (476 aa).

The Cytoplasmic portion of the chain corresponds to 2–33; the sequence is GIKFLEVIKPFCAVLPEIQKPERKIQFREKVL. The chain crosses the membrane as a helical span at residues 34–53; that stretch reads WTAITLFIFLVCCQIPLFGI. Topologically, residues 54 to 76 are lumenal; it reads MSSDSADPFYWMRVILASNRGTL. A helical membrane pass occupies residues 77-96; sequence MELGISPIVTSDLIMQLLAG. Residues 97 to 117 lie on the Cytoplasmic side of the membrane; sequence AKIIEVGDSPKDRALFNGAQK. A helical transmembrane segment spans residues 118–138; the sequence is LFGMIITIGQAIVYVMTGMYG. Topologically, residues 139–144 are lumenal; sequence DPSEMG. A helical membrane pass occupies residues 145–165; that stretch reads AGICLVIIIQLFVAGLIVLLL. Topologically, residues 166 to 172 are cytoplasmic; sequence DELLQKG. Residues 173–193 form a helical membrane-spanning segment; it reads YGLGSGISLLIATNICETIVW. Residues 194 to 240 are Lumenal-facing; sequence KAFSPTTVNTGRGTEFEGAIIALFHLLATRTDKVRALREAFYRQNLP. Residues 241–261 traverse the membrane as a helical segment; the sequence is NLMNLIATVFVFAVVIYFQGF. Topologically, residues 262–288 are cytoplasmic; it reads RVDLPIKSARYRGQYNTYPIKLFYTSN. The chain crosses the membrane as a helical span at residues 289-309; sequence IPIILQSALVSNLYVISQMLS. Topologically, residues 310–354 are lumenal; that stretch reads TRFSGNFIVNLLGTWSDTSTGGPARAYPVGGLCYFLSPPESFGSV. Residues 355 to 375 traverse the membrane as a helical segment; sequence LDDPVHAAIYIVFMLGSCAFF. The Cytoplasmic segment spans residues 376 to 420; the sequence is SKTWIEVSGSSAKDVAKQLKEQQMVMRGHRETSMVHELNRYIPTA. A helical transmembrane segment spans residues 421–441; the sequence is AAFGGLCIGGLSVMADFLGAI. Over 442–445 the chain is Lumenal; the sequence is GSGT. Residues 446–462 traverse the membrane as a helical segment; the sequence is GILLAVTIIYQYFEIFV. The Cytoplasmic portion of the chain corresponds to 463 to 476; that stretch reads KEQSEMGSMGGLFF.

Belongs to the SecY/SEC61-alpha family. As to quaternary structure, the SEC61 channel-forming translocon complex consists of channel-forming core components SEC61A1, SEC61B and SEC61G and different auxiliary components such as SEC62 and SEC63. The SEC61 channel associates with the multi-pass translocon (MPT) complex.

The protein resides in the endoplasmic reticulum membrane. In terms of biological role, component of SEC61 channel-forming translocon complex that mediates transport of signal peptide-containing precursor polypeptides across the endoplasmic reticulum (ER). Forms a ribosome receptor and a gated pore in the ER membrane, both functions required for cotranslational translocation of nascent polypeptides. May cooperate with auxiliary protein SEC62, SEC63 and HSPA5/BiP to enable post-translational transport of small presecretory proteins. The SEC61 channel is also involved in ER membrane insertion of transmembrane proteins: it mediates membrane insertion of the first few transmembrane segments of proteins, while insertion of subsequent transmembrane regions of multi-pass membrane proteins is mediated by the multi-pass translocon (MPT) complex. The chain is Protein transport protein Sec61 subunit alpha (sec61a) from Boreogadus saida (Polar cod).